Here is a 682-residue protein sequence, read N- to C-terminus: Probable methyltransferase PMT12 (682 aa).

Residues 1–11 (MKLFLNSNLLR) lie on the Cytoplasmic side of the membrane. A helical; Signal-anchor for type II membrane protein transmembrane segment spans residues 12 to 32 (NSIFFKISAFVLISVACFFLG). Residues 33-682 (KHWSEDGFRR…KRRKTKGKRA (650 aa)) lie on the Lumenal side of the membrane. N67, N103, N125, N155, N173, N193, N273, N350, N395, N419, N600, and N625 each carry an N-linked (GlcNAc...) asparagine glycan.

The protein belongs to the methyltransferase superfamily.

The protein localises to the golgi apparatus membrane. This is Probable methyltransferase PMT12 from Arabidopsis thaliana (Mouse-ear cress).